The sequence spans 436 residues: Trigger factor (436 aa).

The PPIase FKBP-type domain maps to 161-246 (GDQLNIDFVG…VNSVSEAELP (86 aa)).

This sequence belongs to the FKBP-type PPIase family. Tig subfamily.

Its subcellular location is the cytoplasm. The catalysed reaction is [protein]-peptidylproline (omega=180) = [protein]-peptidylproline (omega=0). Functionally, involved in protein export. Acts as a chaperone by maintaining the newly synthesized protein in an open conformation. Functions as a peptidyl-prolyl cis-trans isomerase. This is Trigger factor from Azotobacter vinelandii (strain DJ / ATCC BAA-1303).